A 391-amino-acid polypeptide reads, in one-letter code: 3-ketoacyl-CoA thiolase (391 aa).

The active-site Acyl-thioester intermediate is Cys-95. Active-site proton acceptor residues include His-347 and Cys-377.

It belongs to the thiolase-like superfamily. Thiolase family. In terms of assembly, heterotetramer of two alpha chains (FadB) and two beta chains (FadA).

It localises to the cytoplasm. The catalysed reaction is an acyl-CoA + acetyl-CoA = a 3-oxoacyl-CoA + CoA. Its pathway is lipid metabolism; fatty acid beta-oxidation. Its function is as follows. Catalyzes the final step of fatty acid oxidation in which acetyl-CoA is released and the CoA ester of a fatty acid two carbons shorter is formed. The protein is 3-ketoacyl-CoA thiolase of Stutzerimonas stutzeri (strain A1501) (Pseudomonas stutzeri).